We begin with the raw amino-acid sequence, 285 residues long: Probable endonuclease 4 (285 aa).

Positions 67, 107, 144, 177, 180, 214, 227, 229, and 259 each coordinate Zn(2+).

Belongs to the AP endonuclease 2 family. Requires Zn(2+) as cofactor.

It carries out the reaction Endonucleolytic cleavage to 5'-phosphooligonucleotide end-products.. Functionally, endonuclease IV plays a role in DNA repair. It cleaves phosphodiester bonds at apurinic or apyrimidinic (AP) sites, generating a 3'-hydroxyl group and a 5'-terminal sugar phosphate. In Persephonella marina (strain DSM 14350 / EX-H1), this protein is Probable endonuclease 4.